The primary structure comprises 347 residues: Melanoma-associated antigen B10 (347 aa).

A compositionally biased stretch (basic residues) spans 1–18; it reads MPRGQKSKLRAREKRRQA. 2 disordered regions span residues 1-20 and 56-92; these read MPRG…QARG and GASN…QMEE. Low complexity predominate over residues 67–78; the sequence is AQSTSTSATAAS. Basic and acidic residues predominate over residues 81–92; it reads RHPEGVNDQMEE. The region spanning 111–310 is the MAGE domain; the sequence is VDEKVIILVH…SEFSNWYTEA (200 aa). Positions 328–347 are disordered; sequence VSATAGARSKVKSSKSSQLQ.

This Homo sapiens (Human) protein is Melanoma-associated antigen B10 (MAGEB10).